The chain runs to 246 residues: uncharacterized protein (246 aa).

Belongs to the BtpA family.

This is an uncharacterized protein from Archaeoglobus fulgidus (strain ATCC 49558 / DSM 4304 / JCM 9628 / NBRC 100126 / VC-16).